A 188-amino-acid polypeptide reads, in one-letter code: Phosphatidylinositol N-acetylglucosaminyltransferase subunit H (188 aa).

The protein belongs to the PIGH family. As to quaternary structure, component of the glycosylphosphatidylinositol-N-acetylglucosaminyltransferase (GPI-GnT) complex composed at least by PIGA, PIGC, PIGH, PIGP, PIGQ, PIGY and DPM2. Interacts with PIGQ.

The protein resides in the cytoplasm. Its pathway is glycolipid biosynthesis; glycosylphosphatidylinositol-anchor biosynthesis. In terms of biological role, part of the glycosylphosphatidylinositol-N-acetylglucosaminyltransferase (GPI-GnT) complex that catalyzes the transfer of N-acetylglucosamine from UDP-N-acetylglucosamine to phosphatidylinositol and participates in the first step of GPI biosynthesis. The chain is Phosphatidylinositol N-acetylglucosaminyltransferase subunit H from Homo sapiens (Human).